The primary structure comprises 98 residues: NADH-ubiquinone oxidoreductase chain 4L (98 aa).

A run of 3 helical transmembrane segments spans residues 2–22, 29–49, and 61–81; these read PSISININLAFATALLGMLMF, SLLCLEGMMLSMFILSTLTIL, and ILLLVFAACEAAIGLALLVMV.

Belongs to the complex I subunit 4L family. Core subunit of respiratory chain NADH dehydrogenase (Complex I) which is composed of 45 different subunits.

Its subcellular location is the mitochondrion inner membrane. It carries out the reaction a ubiquinone + NADH + 5 H(+)(in) = a ubiquinol + NAD(+) + 4 H(+)(out). In terms of biological role, core subunit of the mitochondrial membrane respiratory chain NADH dehydrogenase (Complex I) which catalyzes electron transfer from NADH through the respiratory chain, using ubiquinone as an electron acceptor. Part of the enzyme membrane arm which is embedded in the lipid bilayer and involved in proton translocation. The protein is NADH-ubiquinone oxidoreductase chain 4L (MT-ND4L) of Microcebus simmonsi (Simmons's mouse lemur).